The sequence spans 185 residues: Elongation factor P (185 aa).

The protein belongs to the elongation factor P family.

It localises to the cytoplasm. It participates in protein biosynthesis; polypeptide chain elongation. Its function is as follows. Involved in peptide bond synthesis. Stimulates efficient translation and peptide-bond synthesis on native or reconstituted 70S ribosomes in vitro. Probably functions indirectly by altering the affinity of the ribosome for aminoacyl-tRNA, thus increasing their reactivity as acceptors for peptidyl transferase. This Streptococcus pyogenes serotype M49 (strain NZ131) protein is Elongation factor P.